A 384-amino-acid chain; its full sequence is SAGA complex subunit Spt3 (384 aa).

It belongs to the SPT3 family. Component of the Spt-Ada-Gcn5 acetyltransferase (SAGA) complex consisting of wda/Taf5L, Saf6, Taf9, Taf10b, Taf12, Ada1, Spt3, Spt7, Spt20, Sf3b3, Sf3b5, Nipped-A/Tra1, a histone acetyltransferase (HAT) module made up of Gcn5, Ada2b (Isoform B), Ada3 and Sgf29, and a deubiquitinase (DUB) module made up of not/nonstop, Sgf11 and e(y)2 tethered to SAGA by Atxn7. Taf5 and Taf10, which has partially redundant properties with Taf10b, may also be part of this complex.

It is found in the nucleus. The protein localises to the chromosome. Functionally, component of the transcription regulatory complex SAGA, a multiprotein complex that activates transcription by remodeling chromatin and mediating histone acetylation and deubiquitination. The SAGA complex predominantly acetylates histone H3. Required for oogenesis; involved in transcriptional activation. The sequence is that of SAGA complex subunit Spt3 from Drosophila melanogaster (Fruit fly).